A 619-amino-acid chain; its full sequence is tRNA (guanine(37)-N(1))-methyltransferase 2 (619 aa).

A mitochondrion-targeting transit peptide spans 1-10 (MVSKLSLFRA). S-adenosyl-L-methionine-binding positions include Arg434, 472 to 473 (DL), 500 to 501 (DG), and Asn523.

The protein belongs to the class I-like SAM-binding methyltransferase superfamily. TRM5/TYW2 family. Monomer.

Its subcellular location is the mitochondrion matrix. It localises to the nucleus. The protein resides in the cytoplasm. It carries out the reaction guanosine(37) in tRNA + S-adenosyl-L-methionine = N(1)-methylguanosine(37) in tRNA + S-adenosyl-L-homocysteine + H(+). In terms of biological role, specifically methylates the N1 position of guanosine-37 in various cytoplasmic and mitochondrial tRNAs. Methylation is not dependent on the nature of the nucleoside 5' of the target nucleoside. This is the first step in the biosynthesis of wybutosine (yW), a modified base adjacent to the anticodon of tRNAs and required for accurate decoding. The polypeptide is tRNA (guanine(37)-N(1))-methyltransferase 2 (Arabidopsis thaliana (Mouse-ear cress)).